The chain runs to 223 residues: Ribose-5-phosphate isomerase A (223 aa).

Residues 26–29 (TGST), 82–85 (DGAD), and 95–98 (KGGG) contribute to the substrate site. Catalysis depends on glutamate 104, which acts as the Proton acceptor. Residue lysine 122 coordinates substrate.

It belongs to the ribose 5-phosphate isomerase family. Homodimer.

The enzyme catalyses aldehydo-D-ribose 5-phosphate = D-ribulose 5-phosphate. Its pathway is carbohydrate degradation; pentose phosphate pathway; D-ribose 5-phosphate from D-ribulose 5-phosphate (non-oxidative stage): step 1/1. In terms of biological role, catalyzes the reversible conversion of ribose-5-phosphate to ribulose 5-phosphate. The polypeptide is Ribose-5-phosphate isomerase A (Streptococcus agalactiae serotype V (strain ATCC BAA-611 / 2603 V/R)).